Here is a 125-residue protein sequence, read N- to C-terminus: Protein ApaG (125 aa).

In terms of domain architecture, ApaG spans 1-125 (MIEQPRICVQ…FRLAIPALIH (125 aa)).

This is Protein ApaG from Yersinia pestis bv. Antiqua (strain Antiqua).